Here is a 308-residue protein sequence, read N- to C-terminus: Oxygen-dependent coproporphyrinogen-III oxidase (308 aa).

Ser-100 lines the substrate pocket. His-104 and His-114 together coordinate a divalent metal cation. His-114 functions as the Proton donor in the catalytic mechanism. Substrate is bound at residue 116-118; that stretch reads NFR. Residues His-153 and His-183 each coordinate a divalent metal cation. Positions 248 to 283 are important for dimerization; it reads YVEFNLVFDRGTIFGLQSGGRTESILSSMPPMATWK. Substrate is bound at residue 266–268; the sequence is GGR.

This sequence belongs to the aerobic coproporphyrinogen-III oxidase family. Homodimer. The cofactor is a divalent metal cation.

Its subcellular location is the cytoplasm. It carries out the reaction coproporphyrinogen III + O2 + 2 H(+) = protoporphyrinogen IX + 2 CO2 + 2 H2O. It functions in the pathway porphyrin-containing compound metabolism; protoporphyrin-IX biosynthesis; protoporphyrinogen-IX from coproporphyrinogen-III (O2 route): step 1/1. In terms of biological role, involved in the heme biosynthesis. Catalyzes the aerobic oxidative decarboxylation of propionate groups of rings A and B of coproporphyrinogen-III to yield the vinyl groups in protoporphyrinogen-IX. The chain is Oxygen-dependent coproporphyrinogen-III oxidase from Francisella tularensis subsp. holarctica (strain OSU18).